A 272-amino-acid chain; its full sequence is Pyridoxal phosphate phosphatase YbhA (272 aa).

The Nucleophile role is filled by aspartate 9. Aspartate 9 provides a ligand contact to Mg(2+). Leucine 10 lines the phosphate pocket. Aspartate 11 contacts Mg(2+). Phosphate is bound by residues 43-44 (TG) and lysine 200. Aspartate 223 provides a ligand contact to Mg(2+). A phosphate-binding site is contributed by asparagine 226.

It belongs to the HAD-like hydrolase superfamily. CbbY/CbbZ/Gph/YieH family. Mg(2+) is required as a cofactor. It depends on Mn(2+) as a cofactor. Co(2+) serves as cofactor. Requires Zn(2+) as cofactor.

It carries out the reaction pyridoxal 5'-phosphate + H2O = pyridoxal + phosphate. In terms of biological role, catalyzes the dephosphorylation of pyridoxal-phosphate (PLP). Can also hydrolyze erythrose-4-phosphate (Ery4P) and fructose-1,6-bis-phosphate (Fru1,6bisP). This is Pyridoxal phosphate phosphatase YbhA (ybhA) from Escherichia coli (strain K12).